Here is a 271-residue protein sequence, read N- to C-terminus: 3-methyl-2-oxobutanoate hydroxymethyltransferase (271 aa).

Mg(2+) contacts are provided by aspartate 51 and aspartate 90. 3-methyl-2-oxobutanoate is bound by residues 51–52, aspartate 90, and lysine 118; that span reads DS. Position 120 (glutamate 120) interacts with Mg(2+). Residue glutamate 186 is the Proton acceptor of the active site.

It belongs to the PanB family. As to quaternary structure, homodecamer; pentamer of dimers. Requires Mg(2+) as cofactor.

It localises to the cytoplasm. The catalysed reaction is 3-methyl-2-oxobutanoate + (6R)-5,10-methylene-5,6,7,8-tetrahydrofolate + H2O = 2-dehydropantoate + (6S)-5,6,7,8-tetrahydrofolate. Its pathway is cofactor biosynthesis; (R)-pantothenate biosynthesis; (R)-pantoate from 3-methyl-2-oxobutanoate: step 1/2. Its function is as follows. Catalyzes the reversible reaction in which hydroxymethyl group from 5,10-methylenetetrahydrofolate is transferred onto alpha-ketoisovalerate to form ketopantoate. The polypeptide is 3-methyl-2-oxobutanoate hydroxymethyltransferase (Xanthomonas campestris pv. campestris (strain 8004)).